We begin with the raw amino-acid sequence, 149 residues long: Large ribosomal subunit protein uL13 (149 aa).

The protein belongs to the universal ribosomal protein uL13 family. In terms of assembly, part of the 50S ribosomal subunit.

Its function is as follows. This protein is one of the early assembly proteins of the 50S ribosomal subunit, although it is not seen to bind rRNA by itself. It is important during the early stages of 50S assembly. This chain is Large ribosomal subunit protein uL13, found in Bifidobacterium longum (strain DJO10A).